Reading from the N-terminus, the 436-residue chain is UDP-N-acetylmuramate--L-alanine ligase (436 aa).

110-116 contacts ATP; the sequence is GAHGKTS.

Belongs to the MurCDEF family.

It is found in the cytoplasm. It carries out the reaction UDP-N-acetyl-alpha-D-muramate + L-alanine + ATP = UDP-N-acetyl-alpha-D-muramoyl-L-alanine + ADP + phosphate + H(+). It participates in cell wall biogenesis; peptidoglycan biosynthesis. In terms of biological role, cell wall formation. The sequence is that of UDP-N-acetylmuramate--L-alanine ligase from Lacticaseibacillus casei (strain BL23) (Lactobacillus casei).